We begin with the raw amino-acid sequence, 502 residues long: Activin receptor type-1-like (502 aa).

The first 22 residues, 1–22 (MTLGSFRRGLLMLSVAFGLTRG), serve as a signal peptide directing secretion. At 23 to 119 (DLAKPSKLVN…EEPEVDAHLP (97 aa)) the chain is on the extracellular side. N32 carries an N-linked (GlcNAc...) asparagine glycan. 3 cysteine pairs are disulfide-bonded: C33–C50, C35–C40, and C45–C68. The interval 72–75 (NQEL) is mediates specificity for BMP ligand. 2 cysteine pairs are disulfide-bonded: C76–C88 and C89–C94. N97 carries an N-linked (GlcNAc...) asparagine glycan. A helical transmembrane segment spans residues 120-140 (LILGPVLALPVLVALGALGLW). Over 141 to 502 (RVRRRQEKQR…HNPEKPKVIH (362 aa)) the chain is Cytoplasmic. 3 positions are modified to phosphoserine: S154, S159, and S160. A GS domain is found at 171-200 (SMLGDFLDSDCTTGSGSGLPFLVQRTVARQ). Residues 201–502 (VALVECVGKG…HNPEKPKVIH (302 aa)) form the Protein kinase domain. Residues 207-215 (VGKGRYGEV) and K228 each bind ATP. D329 acts as the Proton acceptor in catalysis.

The protein belongs to the protein kinase superfamily. TKL Ser/Thr protein kinase family. TGFB receptor subfamily. As to quaternary structure, interacts with TSC22D1/TSC-22. The cofactor is Mg(2+). Mn(2+) is required as a cofactor.

It is found in the cell membrane. It catalyses the reaction L-threonyl-[receptor-protein] + ATP = O-phospho-L-threonyl-[receptor-protein] + ADP + H(+). It carries out the reaction L-seryl-[receptor-protein] + ATP = O-phospho-L-seryl-[receptor-protein] + ADP + H(+). In terms of biological role, type I receptor for TGF-beta family ligands BMP9/GDF2 and BMP10 and important regulator of normal blood vessel development. On ligand binding, forms a receptor complex consisting of two type II and two type I transmembrane serine/threonine kinases. Type II receptors phosphorylate and activate type I receptors which autophosphorylate, then bind and activate SMAD transcriptional regulators. May bind activin as well. This Mus musculus (Mouse) protein is Activin receptor type-1-like (Acvrl1).